The chain runs to 463 residues: Glutamyl-tRNA reductase (463 aa).

Substrate is bound by residues 49-52 (TCNR), Ser-109, 114-116 (EQQ), and Gln-120. The active-site Nucleophile is Cys-50. Position 196-201 (196-201 (GAGAMS)) interacts with NADP(+).

The protein belongs to the glutamyl-tRNA reductase family. Homodimer.

It catalyses the reaction (S)-4-amino-5-oxopentanoate + tRNA(Glu) + NADP(+) = L-glutamyl-tRNA(Glu) + NADPH + H(+). The protein operates within porphyrin-containing compound metabolism; protoporphyrin-IX biosynthesis; 5-aminolevulinate from L-glutamyl-tRNA(Glu): step 1/2. Its function is as follows. Catalyzes the NADPH-dependent reduction of glutamyl-tRNA(Glu) to glutamate 1-semialdehyde (GSA). The chain is Glutamyl-tRNA reductase from Corynebacterium glutamicum (strain R).